Reading from the N-terminus, the 237-residue chain is Insulin-like growth factor-binding protein 4 (237 aa).

Residues 2–82 enclose the IGFBP N-terminal domain; that stretch reads EAIHCPPCSE…VHGQGVCMEL (81 aa). Disulfide bonds link Cys-6–Cys-32, Cys-9–Cys-34, Cys-17–Cys-35, Cys-23–Cys-38, Cys-46–Cys-59, and Cys-53–Cys-79. N-linked (GlcNAc...) asparagine glycosylation occurs at Asn-104. Intrachain disulfides connect Cys-110–Cys-117, Cys-153–Cys-183, Cys-194–Cys-205, and Cys-207–Cys-228. The 79-residue stretch at 150–228 folds into the Thyroglobulin type-1 domain; sequence QGSCQSELHR…GLEPKGELDC (79 aa). A Phosphoserine modification is found at Ser-234.

As to quaternary structure, binds IGF2 more than IGF1. In terms of processing, there are two different molecular mass variants (29 kDa and 24 kDa forms). The 29 kDa form was shown to be N-glycosylated. As to expression, detected in adult ewe, liver &gt; kidney &gt; lung &gt;&gt; heart and also in several fetal tissues.

The protein localises to the secreted. Its function is as follows. IGF-binding proteins prolong the half-life of the IGFs and have been shown to either inhibit or stimulate the growth promoting effects of the IGFs on cell culture. They alter the interaction of IGFs with their cell surface receptors. The chain is Insulin-like growth factor-binding protein 4 (IGFBP4) from Ovis aries (Sheep).